A 341-amino-acid chain; its full sequence is Anthranilate phosphoribosyltransferase (341 aa).

5-phospho-alpha-D-ribose 1-diphosphate is bound by residues Gly-84, 87–88 (GD), Thr-92, 94–97 (NVTT), 112–120 (KCGNRSVSS), and Ser-124. Gly-84 serves as a coordination point for anthranilate. Thr-96 contributes to the Mg(2+) binding site. Asn-115 lines the anthranilate pocket. Arg-170 contacts anthranilate. The Mg(2+) site is built by Asp-228 and Glu-229.

The protein belongs to the anthranilate phosphoribosyltransferase family. As to quaternary structure, homodimer. Requires Mg(2+) as cofactor.

The catalysed reaction is N-(5-phospho-beta-D-ribosyl)anthranilate + diphosphate = 5-phospho-alpha-D-ribose 1-diphosphate + anthranilate. It functions in the pathway amino-acid biosynthesis; L-tryptophan biosynthesis; L-tryptophan from chorismate: step 2/5. Functionally, catalyzes the transfer of the phosphoribosyl group of 5-phosphorylribose-1-pyrophosphate (PRPP) to anthranilate to yield N-(5'-phosphoribosyl)-anthranilate (PRA). This Corynebacterium diphtheriae (strain ATCC 700971 / NCTC 13129 / Biotype gravis) protein is Anthranilate phosphoribosyltransferase.